The primary structure comprises 345 residues: Acyl-CoA--sterol O-acyltransferase 1 (345 aa).

9 helical membrane passes run 1 to 21 (MASF…TFFI), 32 to 52 (LILF…IYSL), 54 to 74 (LLGI…LLFA), 86 to 106 (PLSL…QLSP), 120 to 140 (GPLI…AYEY), 148 to 168 (VVLT…LAAT), 231 to 251 (ILAA…IFFY), 258 to 278 (DWKM…EIAI), and 291 to 311 (AISQ…LFLP).

The protein belongs to the wax synthase family.

It localises to the membrane. Its function is as follows. Involved in the esterification of cycloartenol. Not implicated in the formation of sterol esters in flowers or during seed maturation. Has a substrate preference toward saturated fatty acyl donors (16:0 &gt; 18:0 &gt; 16:1 &gt; 18:1). Does not require triacyglycerols (TAGs) as a fatty acyl donor, and is unable to acylate diacylglycerol to produce TAG. The protein is Acyl-CoA--sterol O-acyltransferase 1 (ASAT1) of Arabidopsis thaliana (Mouse-ear cress).